Consider the following 337-residue polypeptide: tRNA N6-adenosine threonylcarbamoyltransferase (337 aa).

The Fe cation site is built by histidine 111 and histidine 115. Substrate contacts are provided by residues 134 to 138 (LVSGG), aspartate 167, glycine 180, and asparagine 272. Aspartate 300 lines the Fe cation pocket.

It belongs to the KAE1 / TsaD family. Fe(2+) is required as a cofactor.

The protein resides in the cytoplasm. It catalyses the reaction L-threonylcarbamoyladenylate + adenosine(37) in tRNA = N(6)-L-threonylcarbamoyladenosine(37) in tRNA + AMP + H(+). Functionally, required for the formation of a threonylcarbamoyl group on adenosine at position 37 (t(6)A37) in tRNAs that read codons beginning with adenine. Is involved in the transfer of the threonylcarbamoyl moiety of threonylcarbamoyl-AMP (TC-AMP) to the N6 group of A37, together with TsaE and TsaB. TsaD likely plays a direct catalytic role in this reaction. In Shewanella loihica (strain ATCC BAA-1088 / PV-4), this protein is tRNA N6-adenosine threonylcarbamoyltransferase.